A 38-amino-acid chain; its full sequence is Trypsin inhibitor 2 (38 aa).

Gln1 carries the pyrrolidone carboxylic acid modification.

In terms of processing, contains disulfide bonds.

Its function is as follows. Inhibits trypsin-like proteases from the guts of the insect pests P.truncatus, P.americana, Acheta sp and Gryllus sp. The chain is Trypsin inhibitor 2 from Opuntia streptacantha (Prickly pear cactus).